Consider the following 188-residue polypeptide: Large ribosomal subunit protein uL5 (188 aa).

The protein belongs to the universal ribosomal protein uL5 family. Part of the 50S ribosomal subunit; part of the 5S rRNA/L5/L18/L25 subcomplex. Contacts the 5S rRNA and the P site tRNA. Forms a bridge to the 30S subunit in the 70S ribosome.

Functionally, this is one of the proteins that bind and probably mediate the attachment of the 5S RNA into the large ribosomal subunit, where it forms part of the central protuberance. In the 70S ribosome it contacts protein S13 of the 30S subunit (bridge B1b), connecting the 2 subunits; this bridge is implicated in subunit movement. Contacts the P site tRNA; the 5S rRNA and some of its associated proteins might help stabilize positioning of ribosome-bound tRNAs. This is Large ribosomal subunit protein uL5 from Aquifex pyrophilus.